The primary structure comprises 5082 residues: Malformin synthetase mlfA (5082 aa).

The interval 225–616 (ERHAANRPHS…CGRADTQVKL (392 aa)) is adenylation 1. The Carrier 1 domain occupies 749 to 822 (SRLEQKIQLA…EAASLAEVQE (74 aa)). At Ser783 the chain carries O-(pantetheine 4'-phosphoryl)serine. A condensation 1 region spans residues 860–1291 (ENVFPCTTMQ…ALNTLSLLQA (432 aa)). The tract at residues 1319 to 1708 (DRWVTRQPEG…GRKDTQVKLR (390 aa)) is adenylation 2. The region spanning 1846-1923 (TPTLELERTL…QLAAEVGEPA (78 aa)) is the Carrier 2 domain. O-(pantetheine 4'-phosphoryl)serine is present on Ser1883. 2 disordered regions span residues 1924–1953 (GQSA…DGVD) and 1986–2012 (GGSS…KKNA). Low complexity-rich tracts occupy residues 1926–1950 (SASS…STND) and 1988–2005 (SSSN…SSSS). A condensation 2 region spans residues 2058–2473 (EDIYPATALQ…AVSCSDKETL (416 aa)). Residues 2496-2888 (RRTPHAPAVC…IGRRDGQLKL (393 aa)) are adenylation 3. In terms of domain architecture, Carrier 3 spans 3024–3100 (RPVTSQEHEM…QLICHLNTIR (77 aa)). Ser3061 carries the O-(pantetheine 4'-phosphoryl)serine modification. 2 condensation regions span residues 3117–3582 (WVAL…TYDQ) and 3603–4022 (NIYP…EHLV). Residues 4047–4426 (HNSRQAVFDD…VGRKDNQIKF (380 aa)) are adenylation 4. The Carrier 4 domain occupies 4560-4636 (MPSTAAERKM…DLSDQAKSLI (77 aa)). Ser4597 carries the O-(pantetheine 4'-phosphoryl)serine modification. The segment at 4673 to 5000 (DVLPTTSFQR…LQTIVQHQNN (328 aa)) is condensation 5.

Belongs to the NRP synthetase family.

It functions in the pathway secondary metabolite biosynthesis. Nonribosomal peptide synthetase; part of the gene cluster that mediates the biosynthesis of malformins, cyclic pentapeptides with a disulfide bond between 2 consecutive cysteins, that show potential anti-tumor as well as antimalarial and antitrypanosomal properties. The nonribosomal peptide synthetase mlfA is responsible of the formation of the cyclic pentapeptide. The malformin biosynthesis clusters in malformin-producing fungi also contain enzymes involved in the formation of the disulfide bond between the two consecutive cysteins within malformins, in addition to additional tailoring enzymes such as methyltransferases or oxidoreductases. They are also composed of up to 4 major facilitator superfamily transporters, and transcription factors probably involved in the regulation of the expression of those clusters. This Aspergillus luchuensis (strain CBS 106.47) protein is Malformin synthetase mlfA.